The chain runs to 344 residues: Tripartite motif-containing protein 44 (344 aa).

Disordered stretches follow at residues 1-25 (MASG…EPDE) and 68-165 (TPPA…EFDP). Residues 75–92 (GAGKEEAEVKVEQEREIE) show a composition bias toward basic and acidic residues. Positions 93 to 165 (SEAGEESESE…ETEAESEFDP (73 aa)) are enriched in acidic residues. Residues 174 to 215 (VAKRKCPDHGLDLSTYCQEDRQLICVLCPVIGAHQGHQLSTL) form a B box-type zinc finger. Zn(2+)-binding residues include Cys179, His182, Cys201, and His207. Residues 290–325 (AHVTEILADIQSHMDRLMTQMAQAKEQLDTSNESAE) are a coiled coil. Positions 309–344 (QMAQAKEQLDTSNESAEPKAEGDEEGPSGASEEEDT) are disordered. Over residues 330 to 344 (GDEEGPSGASEEEDT) the composition is skewed to acidic residues. A phosphoserine mark is found at Ser336 and Ser339.

As to quaternary structure, interacts (via coiled coil) with TRIM17 (via coiled coil).

May play a role in the process of differentiation and maturation of neuronal cells. May regulate the activity of TRIM17. Is a negative regulator of PAX6 expression. This Pongo abelii (Sumatran orangutan) protein is Tripartite motif-containing protein 44 (TRIM44).